Consider the following 331-residue polypeptide: Biotin synthase (331 aa).

In terms of domain architecture, Radical SAM core spans 53-271 (TELQLSQLLS…IAVARIVCPK (219 aa)). [4Fe-4S] cluster contacts are provided by cysteine 68, cysteine 72, and cysteine 75. [2Fe-2S] cluster contacts are provided by cysteine 112, cysteine 143, cysteine 203, and arginine 275.

The protein belongs to the radical SAM superfamily. Biotin synthase family. As to quaternary structure, homodimer. The cofactor is [4Fe-4S] cluster. It depends on [2Fe-2S] cluster as a cofactor.

The enzyme catalyses (4R,5S)-dethiobiotin + (sulfur carrier)-SH + 2 reduced [2Fe-2S]-[ferredoxin] + 2 S-adenosyl-L-methionine = (sulfur carrier)-H + biotin + 2 5'-deoxyadenosine + 2 L-methionine + 2 oxidized [2Fe-2S]-[ferredoxin]. The protein operates within cofactor biosynthesis; biotin biosynthesis; biotin from 7,8-diaminononanoate: step 2/2. Functionally, catalyzes the conversion of dethiobiotin (DTB) to biotin by the insertion of a sulfur atom into dethiobiotin via a radical-based mechanism. In Phenylobacterium zucineum (strain HLK1), this protein is Biotin synthase.